The following is a 321-amino-acid chain: Lipoyl synthase (321 aa).

The [4Fe-4S] cluster site is built by Cys-68, Cys-73, Cys-79, Cys-94, Cys-98, Cys-101, and Ser-308. A Radical SAM core domain is found at 80-297; sequence FNHGTATFMI…RVFAEEIGFT (218 aa).

The protein belongs to the radical SAM superfamily. Lipoyl synthase family. It depends on [4Fe-4S] cluster as a cofactor.

Its subcellular location is the cytoplasm. The enzyme catalyses [[Fe-S] cluster scaffold protein carrying a second [4Fe-4S](2+) cluster] + N(6)-octanoyl-L-lysyl-[protein] + 2 oxidized [2Fe-2S]-[ferredoxin] + 2 S-adenosyl-L-methionine + 4 H(+) = [[Fe-S] cluster scaffold protein] + N(6)-[(R)-dihydrolipoyl]-L-lysyl-[protein] + 4 Fe(3+) + 2 hydrogen sulfide + 2 5'-deoxyadenosine + 2 L-methionine + 2 reduced [2Fe-2S]-[ferredoxin]. It participates in protein modification; protein lipoylation via endogenous pathway; protein N(6)-(lipoyl)lysine from octanoyl-[acyl-carrier-protein]: step 2/2. Functionally, catalyzes the radical-mediated insertion of two sulfur atoms into the C-6 and C-8 positions of the octanoyl moiety bound to the lipoyl domains of lipoate-dependent enzymes, thereby converting the octanoylated domains into lipoylated derivatives. The chain is Lipoyl synthase from Shewanella woodyi (strain ATCC 51908 / MS32).